Reading from the N-terminus, the 138-residue chain is Large ribosomal subunit protein uL14 (138 aa).

It belongs to the universal ribosomal protein uL14 family. As to quaternary structure, part of the 50S ribosomal subunit. Forms a cluster with proteins L3 and L24e, part of which may contact the 16S rRNA in 2 intersubunit bridges. Contacts initiation factor aIF-6.

Its subcellular location is the cytoplasm. In terms of biological role, binds to 23S rRNA. Forms part of two intersubunit bridges in the 70S ribosome. In Saccharolobus solfataricus (strain ATCC 35092 / DSM 1617 / JCM 11322 / P2) (Sulfolobus solfataricus), this protein is Large ribosomal subunit protein uL14.